A 502-amino-acid chain; its full sequence is ATP synthase subunit alpha (502 aa).

170-177 is a binding site for ATP; the sequence is GDRKTGKT.

Belongs to the ATPase alpha/beta chains family. As to quaternary structure, F-type ATPases have 2 components, CF(1) - the catalytic core - and CF(0) - the membrane proton channel. CF(1) has five subunits: alpha(3), beta(3), gamma(1), delta(1), epsilon(1). CF(0) has four main subunits: a, b, b' and c.

It is found in the cellular thylakoid membrane. It carries out the reaction ATP + H2O + 4 H(+)(in) = ADP + phosphate + 5 H(+)(out). Functionally, produces ATP from ADP in the presence of a proton gradient across the membrane. The alpha chain is a regulatory subunit. The chain is ATP synthase subunit alpha from Microcystis aeruginosa (strain NIES-843 / IAM M-2473).